The sequence spans 98 residues: NADH-ubiquinone oxidoreductase chain 4L (98 aa).

Helical transmembrane passes span 1–21 (MIPTYMNIMLAFTISLLGMLT), 27–47 (VASLLCLEGMTMSLFIMTALI), and 61–81 (IILLVFAACEAAVGLALLISI).

The protein belongs to the complex I subunit 4L family. Core subunit of respiratory chain NADH dehydrogenase (Complex I) which is composed of 45 different subunits.

It localises to the mitochondrion inner membrane. It carries out the reaction a ubiquinone + NADH + 5 H(+)(in) = a ubiquinol + NAD(+) + 4 H(+)(out). In terms of biological role, core subunit of the mitochondrial membrane respiratory chain NADH dehydrogenase (Complex I) which catalyzes electron transfer from NADH through the respiratory chain, using ubiquinone as an electron acceptor. Part of the enzyme membrane arm which is embedded in the lipid bilayer and involved in proton translocation. The protein is NADH-ubiquinone oxidoreductase chain 4L (MT-ND4L) of Macaca sylvanus (Barbary macaque).